The primary structure comprises 84 residues: Large ribosomal subunit protein bL31B (84 aa).

It belongs to the bacterial ribosomal protein bL31 family. Type B subfamily. Part of the 50S ribosomal subunit.

In Rhodococcus erythropolis (strain PR4 / NBRC 100887), this protein is Large ribosomal subunit protein bL31B.